Consider the following 371-residue polypeptide: Queuine tRNA-ribosyltransferase (371 aa).

D90 (proton acceptor) is an active-site residue. Substrate-binding positions include 90–94 (DSGGF), D144, Q185, and G212. Residues 243 to 249 (GVGTPED) form an RNA binding region. The active-site Nucleophile is D262. The RNA binding; important for wobble base 34 recognition stretch occupies residues 267–271 (TRNAR). 4 residues coordinate Zn(2+): C300, C302, C305, and H331.

This sequence belongs to the queuine tRNA-ribosyltransferase family. In terms of assembly, homodimer. Within each dimer, one monomer is responsible for RNA recognition and catalysis, while the other monomer binds to the replacement base PreQ1. Requires Zn(2+) as cofactor.

It catalyses the reaction 7-aminomethyl-7-carbaguanine + guanosine(34) in tRNA = 7-aminomethyl-7-carbaguanosine(34) in tRNA + guanine. It functions in the pathway tRNA modification; tRNA-queuosine biosynthesis. Catalyzes the base-exchange of a guanine (G) residue with the queuine precursor 7-aminomethyl-7-deazaguanine (PreQ1) at position 34 (anticodon wobble position) in tRNAs with GU(N) anticodons (tRNA-Asp, -Asn, -His and -Tyr). Catalysis occurs through a double-displacement mechanism. The nucleophile active site attacks the C1' of nucleotide 34 to detach the guanine base from the RNA, forming a covalent enzyme-RNA intermediate. The proton acceptor active site deprotonates the incoming PreQ1, allowing a nucleophilic attack on the C1' of the ribose to form the product. After dissociation, two additional enzymatic reactions on the tRNA convert PreQ1 to queuine (Q), resulting in the hypermodified nucleoside queuosine (7-(((4,5-cis-dihydroxy-2-cyclopenten-1-yl)amino)methyl)-7-deazaguanosine). The chain is Queuine tRNA-ribosyltransferase from Acidithiobacillus ferrooxidans (strain ATCC 23270 / DSM 14882 / CIP 104768 / NCIMB 8455) (Ferrobacillus ferrooxidans (strain ATCC 23270)).